We begin with the raw amino-acid sequence, 437 residues long: MSMFLDTAKISVQAGRGGDGMVAFRREKYVPNGGPWGGDGGKGGSVIFKVDEGLRTLMDFRYNRKFKAKNGEKGMTKGMHGRGAEDLIVSIPPGTTVRDAETGKVITDMVEDGQEFVVAHGGRGGRGNIRFATPRNPAPEIAENGEPGEERELQLELKILADVGLVGFPSVGKSTILSVVTAAKPKIGAYHFTTIVPNLGMVRTKSGESFAMADLPGLIEGASQGVGLGTQFLRHIERTRVILHVIDMSASEGRDPYEDYLQINKELETYNLRLMERPQIIVANKMDMPEAEENLKEFKEKLAANYDEFDELPQIFPISSLAHQGLENLLEATAELLDQTDEFLLYNEDDMEQEEVYYGFNEEERPFEISRDDDASWVLSGEKLEKLFVMTNMERDESIMKFARQLRGMGVDEALRERGAKDGDIVRIGNFEFEFVD.

One can recognise an Obg domain in the interval 2 to 160; that stretch reads SMFLDTAKIS…RELQLELKIL (159 aa). The segment at 127–146 is disordered; that stretch reads GNIRFATPRNPAPEIAENGE. The OBG-type G domain occupies 161–338; sequence ADVGLVGFPS…LLEATAELLD (178 aa). Residues 167 to 174, 192 to 196, 214 to 217, 284 to 287, and 319 to 321 contribute to the GTP site; these read GFPSVGKS, FTTIV, DLPG, NKMD, and SSL. Mg(2+)-binding residues include serine 174 and threonine 194. The region spanning 359-437 is the OCT domain; the sequence is GFNEEERPFE…IGNFEFEFVD (79 aa).

It belongs to the TRAFAC class OBG-HflX-like GTPase superfamily. OBG GTPase family. In terms of assembly, monomer. Mg(2+) is required as a cofactor.

It is found in the cytoplasm. Functionally, an essential GTPase which binds GTP, GDP and possibly (p)ppGpp with moderate affinity, with high nucleotide exchange rates and a fairly low GTP hydrolysis rate. Plays a role in control of the cell cycle, stress response, ribosome biogenesis and in those bacteria that undergo differentiation, in morphogenesis control. The polypeptide is GTPase Obg (Streptococcus thermophilus (strain ATCC BAA-491 / LMD-9)).